The sequence spans 555 residues: Glutamine--tRNA ligase (555 aa).

The 'HIGH' region signature appears at 35–45 (PEPNGYLHIGH). ATP is bound by residues 36-38 (EPN) and 42-48 (HIGHAKS). L-glutamine-binding residues include aspartate 68 and tyrosine 213. ATP is bound by residues threonine 232 and 262–263 (RL). The 'KMSKS' region motif lies at 269–273 (ITSKR).

It belongs to the class-I aminoacyl-tRNA synthetase family. As to quaternary structure, monomer.

The protein resides in the cytoplasm. The enzyme catalyses tRNA(Gln) + L-glutamine + ATP = L-glutaminyl-tRNA(Gln) + AMP + diphosphate. The chain is Glutamine--tRNA ligase from Stutzerimonas stutzeri (strain A1501) (Pseudomonas stutzeri).